The chain runs to 206 residues: Ras-related protein RABG3c (206 aa).

15–22 (GDSGVGKT) lines the GTP pocket. The short motif at 37 to 45 (YKATIGADF) is the Effector region element. GTP-binding positions include 63–67 (DTAGQ), 125–128 (NKTD), and 158–159 (SA). 2 S-geranylgeranyl cysteine lipidation sites follow: Cys-204 and Cys-206. Cys-206 carries the post-translational modification Cysteine methyl ester.

This sequence belongs to the small GTPase superfamily. Rab family.

Its subcellular location is the cell membrane. Functionally, intracellular vesicle trafficking and protein transport. The polypeptide is Ras-related protein RABG3c (RABG3C) (Arabidopsis thaliana (Mouse-ear cress)).